The sequence spans 334 residues: Mevalonate kinase (334 aa).

Residue proline 110–alanine 120 participates in ATP binding. The active-site Proton acceptor is aspartate 161.

Belongs to the GHMP kinase family. Mevalonate kinase subfamily. In terms of assembly, homodimer. The cofactor is Mg(2+).

It localises to the cytoplasm. It carries out the reaction (R)-mevalonate + ATP = (R)-5-phosphomevalonate + ADP + H(+). It participates in isoprenoid biosynthesis; isopentenyl diphosphate biosynthesis via mevalonate pathway; isopentenyl diphosphate from (R)-mevalonate: step 1/3. Functionally, catalyzes the phosphorylation of (R)-mevalonate (MVA) to (R)-mevalonate 5-phosphate (MVAP). Functions in the mevalonate (MVA) pathway leading to isopentenyl diphosphate (IPP), a key precursor for the biosynthesis of isoprenoid compounds such as archaeal membrane lipids. This Thermococcus gammatolerans (strain DSM 15229 / JCM 11827 / EJ3) protein is Mevalonate kinase.